Here is a 356-residue protein sequence, read N- to C-terminus: Nicotinate-nucleotide--dimethylbenzimidazole phosphoribosyltransferase (356 aa).

The Proton acceptor role is filled by Glu317.

This sequence belongs to the CobT family. As to quaternary structure, homodimer.

It carries out the reaction 5,6-dimethylbenzimidazole + nicotinate beta-D-ribonucleotide = alpha-ribazole 5'-phosphate + nicotinate + H(+). It functions in the pathway nucleoside biosynthesis; alpha-ribazole biosynthesis; alpha-ribazole from 5,6-dimethylbenzimidazole: step 1/2. Its function is as follows. Catalyzes the synthesis of alpha-ribazole-5'-phosphate from nicotinate mononucleotide (NAMN) and 5,6-dimethylbenzimidazole (DMB). This chain is Nicotinate-nucleotide--dimethylbenzimidazole phosphoribosyltransferase, found in Salmonella paratyphi A (strain AKU_12601).